The following is a 439-amino-acid chain: Divalent metal cation transporter MntH 1 (439 aa).

9 helical membrane passes run 64 to 84, 139 to 161, 171 to 191, 214 to 234, 262 to 282, 300 to 320, 359 to 379, 380 to 400, and 418 to 438; these read FGYA…LLQS, LLGV…VLAL, AIVL…LVLI, PLYL…LYLH, IGSL…AAAA, LLDP…ALLA, LVPA…KLLV, LSQV…IRFS, and LAWS…YFWF.

Belongs to the NRAMP family.

It localises to the cell inner membrane. H(+)-stimulated, divalent metal cation uptake system. In Pseudomonas aeruginosa (strain ATCC 15692 / DSM 22644 / CIP 104116 / JCM 14847 / LMG 12228 / 1C / PRS 101 / PAO1), this protein is Divalent metal cation transporter MntH 1.